The primary structure comprises 451 residues: UPF0210 protein lin0538 (451 aa).

This sequence belongs to the UPF0210 family. Homodimer.

In Listeria innocua serovar 6a (strain ATCC BAA-680 / CLIP 11262), this protein is UPF0210 protein lin0538.